The primary structure comprises 235 residues: Large ribosomal subunit protein uL1 (235 aa).

This sequence belongs to the universal ribosomal protein uL1 family. As to quaternary structure, part of the 50S ribosomal subunit.

Its function is as follows. Binds directly to 23S rRNA. The L1 stalk is quite mobile in the ribosome, and is involved in E site tRNA release. Functionally, protein L1 is also a translational repressor protein, it controls the translation of the L11 operon by binding to its mRNA. The chain is Large ribosomal subunit protein uL1 from Thermobifida fusca (strain YX).